The following is a 77-amino-acid chain: Acyl carrier protein (77 aa).

Positions 1-76 constitute a Carrier domain; it reads MAIFDDVKKV…DVVNYIENLQ (76 aa). Serine 36 carries the post-translational modification O-(pantetheine 4'-phosphoryl)serine.

The protein belongs to the acyl carrier protein (ACP) family. 4'-phosphopantetheine is transferred from CoA to a specific serine of apo-ACP by AcpS. This modification is essential for activity because fatty acids are bound in thioester linkage to the sulfhydryl of the prosthetic group.

It localises to the cytoplasm. It functions in the pathway lipid metabolism; fatty acid biosynthesis. In terms of biological role, carrier of the growing fatty acid chain in fatty acid biosynthesis. This chain is Acyl carrier protein, found in Campylobacter lari (strain RM2100 / D67 / ATCC BAA-1060).